A 134-amino-acid chain; its full sequence is Photosystem II assembly factor lipoprotein Psb27 (134 aa).

The signal sequence occupies residues 1–21; it reads MKRFWAMVCALFLSVSLLLTS. The N-palmitoyl cysteine moiety is linked to residue Cys22. Cys22 is lipidated: S-diacylglycerol cysteine.

This sequence belongs to the Psb27 family. Part of a photosystem II (PSII) assembly intermediate complex PSII-I; crystallized from a strain deleted of psbJ, it forms monomeric PSII before addition of the oxygen evolving complex. PSII-I includes 3 assembly factors not found in mature PSII (Psb27, Psb28 and Psb34). Binds to the lumenal side of PSII, adjacent to the CP43 (psbC) subunit.

It localises to the cellular thylakoid membrane. In terms of biological role, plays a role in the repair and/or biogenesis of the calcium-manganese-oxide cluster on the lumenal face of the thylakoid membrane. Its presence in a photosystem II (PSII) preparation prevents binding of other extrinsic subunits PsbO, PsbU and PsbV, and thus assembly of calcium-manganese-oxide cluster. Psb27-containing complexes lack oxygen evolving activity and an oxidizable calcium-manganese-oxide cluster, but have a normal reaction center. The protein is Photosystem II assembly factor lipoprotein Psb27 of Thermosynechococcus vestitus (strain NIES-2133 / IAM M-273 / BP-1).